Consider the following 338-residue polypeptide: Large ribosomal subunit protein uL10 (338 aa).

A disordered region spans residues 295–338; that stretch reads EVPTIQPTTPPEKKEEEEKKEEEEEEAETVSEEELAEGLGALFG. Positions 312 to 330 are enriched in acidic residues; the sequence is EKKEEEEEEAETVSEEELA.

This sequence belongs to the universal ribosomal protein uL10 family. Part of the 50S ribosomal subunit. Forms part of the ribosomal stalk which helps the ribosome interact with GTP-bound translation factors. Forms a heptameric L10(L12)2(L12)2(L12)2 complex, where L10 forms an elongated spine to which the L12 dimers bind in a sequential fashion.

Functionally, forms part of the ribosomal stalk, playing a central role in the interaction of the ribosome with GTP-bound translation factors. The chain is Large ribosomal subunit protein uL10 from Staphylothermus marinus (strain ATCC 43588 / DSM 3639 / JCM 9404 / F1).